Reading from the N-terminus, the 121-residue chain is Perlustrin-like protein (121 aa).

A signal peptide spans 1–23; it reads MKFGVGFLLSCLVALNTVQNMLA. An IGFBP N-terminal domain is found at 24 to 104; it reads LSCLPCDFDT…FDFKGTCQES (81 aa). 6 disulfide bridges follow: Cys26–Cys52, Cys29–Cys54, Cys36–Cys55, Cys45–Cys58, Cys66–Cys79, and Cys73–Cys101. Residues Asn68, Asn81, and Asn117 are each glycosylated (N-linked (GlcNAc...) asparagine).

In terms of tissue distribution, component of the acid-insoluble organic matrix of calcified layers of the shell (at protein level).

It localises to the secreted. This is Perlustrin-like protein from Lottia gigantea (Giant owl limpet).